The following is a 248-amino-acid chain: MAMQLEICANSATSCQQAELGGATRVELCAGIPEGGTTPSAGEMAVARSLIAIPIHVIIRPRAGDFVYSSEEIEAMCYDIRVVRSLGMEGVVFGCLTPEGGYDEEANSRLLKEAQGMQLTFHRAFDVCAAPFEMLEKLIATGFHRVLTSGCAPTALEGKDMIGALNKQAAGRIGIMAGCGIRLGNIETLARHTGITQFHSSLRHDIPSSMRFRRPEVSMGGTVKIDEYSRPETSADMVRQAVDILQGI.

Belongs to the CutC family.

The protein resides in the cytoplasm. The polypeptide is PF03932 family protein CutC (Porphyromonas gingivalis (strain ATCC 33277 / DSM 20709 / CIP 103683 / JCM 12257 / NCTC 11834 / 2561)).